Here is a 557-residue protein sequence, read N- to C-terminus: CTP synthase (557 aa).

The interval 1 to 267 (MAKFVFVTGG…CREVLDVLDL (267 aa)) is amidoligase domain. Serine 13 lines the CTP pocket. Residue serine 13 participates in UTP binding. Residues 14–19 (SIGKGI) and aspartate 71 each bind ATP. Residues aspartate 71 and glutamate 141 each contribute to the Mg(2+) site. Residues 148–150 (DIE), 188–193 (KTKPTQ), and lysine 224 contribute to the CTP site. UTP-binding positions include 188 to 193 (KTKPTQ) and lysine 224. The Glutamine amidotransferase type-1 domain maps to 292-534 (KVALVGKYVQ…IEAAQQRLPC (243 aa)). Position 354 (glycine 354) interacts with L-glutamine. Cysteine 381 acts as the Nucleophile; for glutamine hydrolysis in catalysis. L-glutamine-binding positions include 382–385 (LGMQ), glutamate 405, and arginine 462. Active-site residues include histidine 507 and glutamate 509. A disordered region spans residues 532-557 (LPCSPSEAMRQQNNSAAGSSHPSLQP). A compositionally biased stretch (polar residues) spans 540-557 (MRQQNNSAAGSSHPSLQP).

This sequence belongs to the CTP synthase family. As to quaternary structure, homotetramer.

It catalyses the reaction UTP + L-glutamine + ATP + H2O = CTP + L-glutamate + ADP + phosphate + 2 H(+). It carries out the reaction L-glutamine + H2O = L-glutamate + NH4(+). The catalysed reaction is UTP + NH4(+) + ATP = CTP + ADP + phosphate + 2 H(+). The protein operates within pyrimidine metabolism; CTP biosynthesis via de novo pathway; CTP from UDP: step 2/2. Allosterically activated by GTP, when glutamine is the substrate; GTP has no effect on the reaction when ammonia is the substrate. The allosteric effector GTP functions by stabilizing the protein conformation that binds the tetrahedral intermediate(s) formed during glutamine hydrolysis. Inhibited by the product CTP, via allosteric rather than competitive inhibition. Functionally, catalyzes the ATP-dependent amination of UTP to CTP with either L-glutamine or ammonia as the source of nitrogen. Regulates intracellular CTP levels through interactions with the four ribonucleotide triphosphates. This chain is CTP synthase, found in Synechococcus sp. (strain CC9311).